A 224-amino-acid polypeptide reads, in one-letter code: Glutamate/aspartate import permease protein GltK (224 aa).

Over 1–19 the chain is Periplasmic; sequence MYEFDWSSIVPSLPYLLDG. The helical transmembrane segment at 20-40 threads the bilayer; that stretch reads LVITLKITVTAVVIGILWGTM. Positions 20–216 constitute an ABC transmembrane type-1 domain; that stretch reads LVITLKITVT…VISLSASLLV (197 aa). Residues 41 to 67 lie on the Cytoplasmic side of the membrane; sequence LAVMRLSSFAPVAWFAKAYVNVFRSIP. A helical transmembrane segment spans residues 68–88; that stretch reads LVMVLLWFYLIVPGFLQNVLG. Residues 89–94 lie on the Periplasmic side of the membrane; the sequence is LSPKND. A helical transmembrane segment spans residues 95–112; sequence IRLISAMVAFSMFEAAYY. The Cytoplasmic portion of the chain corresponds to 113–154; it reads SEIIRAGIQSISRGQSSAALALGMTHWQSMKLIILPQAFRAM. Residues 155–175 form a helical membrane-spanning segment; it reads VPLLLTQGIVLFQDTSLVYVL. Over 176–196 the chain is Periplasmic; the sequence is SLADFFRTASTIGERDGTQVE. A helical membrane pass occupies residues 197–217; the sequence is MILFAGFVYFVISLSASLLVS. Topologically, residues 218–224 are cytoplasmic; that stretch reads YLKRRTA.

The protein belongs to the binding-protein-dependent transport system permease family. HisMQ subfamily. The complex is composed of two ATP-binding proteins (GltL), two transmembrane proteins (GltJ and GltK) and a solute-binding protein (GltI).

It is found in the cell inner membrane. In terms of biological role, part of the ABC transporter complex GltIJKL involved in glutamate and aspartate uptake. Probably responsible for the translocation of the substrate across the membrane. The protein is Glutamate/aspartate import permease protein GltK (gltK) of Escherichia coli O157:H7.